Reading from the N-terminus, the 695-residue chain is Probable glutamine--tRNA ligase (695 aa).

Positions 201–211 match the 'HIGH' region motif; the sequence is PEPNGILHIGH. Residues 202 to 204 and 208 to 214 contribute to the ATP site; these read EPN and HIGHAKA. L-glutamine contacts are provided by Asp-234 and Tyr-391. Residues Thr-410, 439 to 440, and 447 to 449 each bind ATP; these read RL and LSK. Residues 446–450 carry the 'KMSKS' region motif; the sequence is VLSKR.

The protein belongs to the class-I aminoacyl-tRNA synthetase family.

The enzyme catalyses tRNA(Gln) + L-glutamine + ATP = L-glutaminyl-tRNA(Gln) + AMP + diphosphate. The sequence is that of Probable glutamine--tRNA ligase from Vairimorpha ceranae (strain BRL01) (Microsporidian parasite).